The primary structure comprises 511 residues: Lysine--tRNA ligase 2 (511 aa).

A compositionally biased stretch (polar residues) spans 1-11 (MTMEINNTDPS). The segment at 1–21 (MTMEINNTDPSENMPLPDDVD) is disordered. Mg(2+) contacts are provided by E421 and E428.

This sequence belongs to the class-II aminoacyl-tRNA synthetase family. As to quaternary structure, homodimer. Mg(2+) serves as cofactor.

It localises to the cytoplasm. It carries out the reaction tRNA(Lys) + L-lysine + ATP = L-lysyl-tRNA(Lys) + AMP + diphosphate. This chain is Lysine--tRNA ligase 2, found in Methanosarcina acetivorans (strain ATCC 35395 / DSM 2834 / JCM 12185 / C2A).